The following is a 540-amino-acid chain: GMP synthase [glutamine-hydrolyzing] (540 aa).

A Glutamine amidotransferase type-1 domain is found at Lys-29–Asp-222. Cys-106 functions as the Nucleophile in the catalytic mechanism. Residues His-196 and Glu-198 contribute to the active site. A GMPS ATP-PPase domain is found at Trp-223–Arg-415. An ATP-binding site is contributed by Ser-250–Ala-256.

As to quaternary structure, homodimer.

It catalyses the reaction XMP + L-glutamine + ATP + H2O = GMP + L-glutamate + AMP + diphosphate + 2 H(+). The protein operates within purine metabolism; GMP biosynthesis; GMP from XMP (L-Gln route): step 1/1. Its function is as follows. Catalyzes the synthesis of GMP from XMP. This Rhodopseudomonas palustris (strain ATCC BAA-98 / CGA009) protein is GMP synthase [glutamine-hydrolyzing].